We begin with the raw amino-acid sequence, 546 residues long: Probable zinc metalloprotease EGY2, chloroplastic (546 aa).

Residues 1–64 (MQLPAMSCSP…QIRNRRFVCQ (64 aa)) constitute a chloroplast transit peptide. Residues 67-143 (TETEPDGDGN…DATPASDAQE (77 aa)) are disordered. The span at 69-86 (TEPDGDGNGDEEKEELGD) shows a compositional bias: acidic residues. Polar residues-rich tracts occupy residues 89–110 (SSPSVDSVTQENGSAESETNAD) and 118–130 (NTEPLSSSDTVQN). A run of 7 helical transmembrane segments spans residues 257–277 (AVPEWFAAASFGVVTIFTLLL), 301–321 (VYGALVTAAIIGVHEIAHILA), 326–346 (GIKLAVPYFVPSWQIGSFGAI), 364–384 (AAGPLAGFSLGFVLLLLGFIL), 427–447 (PLVLWAWAGLLINAINSIPAG), 474–494 (LLGISALFNDVAFYWVVLIFF), and 514–534 (YISIGVAILLFGLLVCLPYPF).

The protein belongs to the peptidase M50B family.

It localises to the plastid. It is found in the chloroplast membrane. Its function is as follows. Probable membrane-associated metalloprotease that may be involved in chloroplast development. The polypeptide is Probable zinc metalloprotease EGY2, chloroplastic (EGY2) (Oryza sativa subsp. japonica (Rice)).